The chain runs to 638 residues: Ubiquilin-2 (638 aa).

Residues 1-26 are compositionally biased toward low complexity; the sequence is MAENGESSGPPRPSRGPAAAPGAASP. Disordered regions lie at residues 1-31 and 107-158; these read MAEN…AEPK and RPQG…SSFG. Alanine 2 carries the N-acetylalanine modification. A Phosphoserine modification is found at serine 25. The region spanning 33–107 is the Ubiquitin-like domain; sequence IKVTVKTPKE…VHLVIKSQNR (75 aa). Over residues 112 to 158 the composition is skewed to low complexity; sequence ATTQPSTTAGTSTTTTTTTTAAAPAATTSSAPRSSSTPTTTNSSSFG. 2 STI1 domains span residues 189–217 and 219–258; these read SPEM…QLIM and NPQM…MQEM. The disordered stretch occupies residues 298 to 364; that stretch reads FGGNPFATVG…SGSSSSSTTA (67 aa). A compositionally biased stretch (low complexity) spans 305–316; the sequence is TVGSSSTSGEGT. A compositionally biased stretch (pro residues) spans 327 to 336; sequence LPNPWAPPPT. Over residues 337 to 364 the composition is skewed to low complexity; sequence TQTAATTTTTTTTSSGSGSGSSSSSTTA. STI1 domains follow at residues 393-440 and 444-476; these read NPQL…QEQM and LPNF…QQGL. 11 tandem repeats follow at residues 505–507, 508–510, 511–513, 514–516, 517–519, 520–522, 523–525, 526–528, 529–531, 532–533, and 535–537. Residues 505 to 537 are 11 X 3 AA tandem repeats P-X-X; it reads PVGPVTPIGPIGPIVPFTPIGPIGPIGPTGPAS. The segment at 528–570 is disordered; sequence GPIGPTGPASSPGSTGTGIPPATTVSSSAPTETISPTSESGPN. Residues 533-551 show a composition bias toward low complexity; sequence TGPASSPGSTGTGIPPATT. A compositionally biased stretch (polar residues) spans 552–570; the sequence is VSSSAPTETISPTSESGPN. Residues 589–635 enclose the UBA domain; the sequence is PPNPEVRFQQQLEQLNAMGFLNREANLQALIATGGDINAAIERLLGS.

Homodimer. Forms heterodimer with UBQLN1. Binds UBE3A and BTRC. Interacts with the 19S proteasome subunit. Interacts with C9orf72. Binds CD47. Interacts with HNRNPA1 and HNRNPU. Found in a complex with UBQLN1 and MAP1LC3A/B/C. Interacts with EPS15, EPN1 and EPN2. Interacts with HERPUD1. Interacts with RAD23A. Interacts with TARDBP. Interacts (via C-terminus) with FAF2 (via N-terminus). Interacts with UBQLN4. Degraded during macroautophagy. In terms of tissue distribution, highly expressed in smooth muscle. Expression in other tissues is very low.

It is found in the cytoplasm. The protein localises to the nucleus. The protein resides in the membrane. It localises to the cytoplasmic vesicle. Its subcellular location is the autophagosome. Functionally, plays an important role in the regulation of different protein degradation mechanisms and pathways including ubiquitin-proteasome system (UPS), autophagy and the endoplasmic reticulum-associated protein degradation (ERAD) pathway. Mediates the proteasomal targeting of misfolded or accumulated proteins for degradation by binding (via UBA domain) to their polyubiquitin chains and by interacting (via ubiquitin-like domain) with the subunits of the proteasome. Plays a role in the ERAD pathway via its interaction with ER-localized proteins FAF2/UBXD8 and HERPUD1 and may form a link between the polyubiquitinated ERAD substrates and the proteasome. Involved in the regulation of macroautophagy and autophagosome formation; required for maturation of autophagy-related protein LC3 from the cytosolic form LC3-I to the membrane-bound form LC3-II and may assist in the maturation of autophagosomes to autolysosomes by mediating autophagosome-lysosome fusion. Negatively regulates the endocytosis of GPCR receptors: AVPR2 and ADRB2, by specifically reducing the rate at which receptor-arrestin complexes concentrate in clathrin-coated pits (CCPs). Links CD47 to vimentin-containing intermediate filaments of the cytoskeleton. The polypeptide is Ubiquilin-2 (Ubqln2) (Mus musculus (Mouse)).